The primary structure comprises 222 residues: UPF0502 protein XAC4278 (222 aa).

Belongs to the UPF0502 family.

The protein is UPF0502 protein XAC4278 of Xanthomonas axonopodis pv. citri (strain 306).